The primary structure comprises 631 residues: MBT domain-containing protein 1 (631 aa).

Residues 1-31 form a disordered region; the sequence is MFDGYDSCSEDTSSSSSSEESEEEVAPLPSN. An FCS-type zinc finger spans residues 45 to 80; that stretch reads PDGKSGMATCEMCGMVGVRDAFYSKTKRFCSVSCSR. The Zn(2+) site is built by C54, C57, C74, and C78. K115 carries the N6-acetyllysine modification. MBT repeat units follow at residues 144–248, 256–353, 354–459, and 467–563; these read FSWG…LVPP, TNWK…IGHR, FKRS…LTPP, and FKWF…LQPP. The segment at 563–631 is disordered; that stretch reads PASQSSRESQ…SATVYIKQEP (69 aa). Low complexity predominate over residues 564 to 576; that stretch reads ASQSSRESQSASS. Over residues 577–593 the composition is skewed to basic residues; the sequence is KQKKKAKSQQYKGHKKM.

In terms of assembly, monomer. Component of the NuA4 histone acetyltransferase complex. Interacts with EPC1; interaction is direct and promotes recruitment of MBTD1 into the NuA4 histone acetyltransferase complex.

It localises to the nucleus. It is found in the chromosome. Functionally, chromatin reader component of the NuA4 histone acetyltransferase complex, a multiprotein complex involved in transcriptional activation of select genes principally by acetylation of nucleosomal histones H4 and H2A. The NuA4 complex plays a direct role in repair of DNA double-strand breaks (DSBs) by promoting homologous recombination (HR). MBTD1 specifically recognizes and binds monomethylated and dimethylated 'Lys-20' on histone H4 (H4K20me1 and H4K20me2, respectively). In the NuA4 complex, MBTD1 promotes recruitment of the complex to H4K20me marks by competing with TP53BP1 for binding to H4K20me. Following recruitment to H4K20me at DNA breaks, the NuA4 complex catalyzes acetylation of 'Lys-15' on histone H2A (H2AK15), blocking the ubiquitination mark required for TP53BP1 localization at DNA breaks, thereby promoting homologous recombination (HR). The polypeptide is MBT domain-containing protein 1 (Mus musculus (Mouse)).